The chain runs to 701 residues: MSCCKGLTPQCVRVRLPRRPALSHPARLYSSSSSSNSHSSPSRPRLLSRPQPHNAILHLPRPNLGSGRYDRIPQARSSHHSSAPMTDLEQRIAAIPIERYRNFCVIAHVDHGKSTLSDRLLELTGTISASDENKQILDKLDVERERGITVKAQTCTMLYRYRGEDYLLHLVDTPGHVDFRAEVTRSYASCGGALLLVDASQGVQAQTVANFYLAFAEGLTLVPVVNKIDLPTADPERALKQLRDTFELDVNEDGTGAVLVSAKAGTNVEKVLPAVIEQIPHPTGDPNAPLRLLLVDSWYDTFRGVVLLVRIFNGTVRPGDNVVSLATGNRYTVGEVGIQYPHPTPQTALRPGQVGYLSFSPGMKRIQDAKIGDTFTFQGSEAVVEPYPGFEEPKPMVFVAAFPTDQSDYQRLADSITQLTLNDRSVTLQKDFSEALGAGWRLGFLGSLHCSVFQDRLRQEHGASIMLTEPAVPTKVQWRDGKSTIITNPTQFPDQSEYHGKIEGFYEPFVAATIAVPEEYLGRIIKLCEDSRGEQESIEFFGAQQVIVKYALPSMALVDDLFGKLKGASRGYATLDYEDAGWRRSELVKLNLLVNKVPVDAICRVVHTSQVERLGRKWVTKFKEHVDRQMFEVVIQAAVGKRIIARETIKPFRKDVTAKLHAADPSRRRKLLEKQKEGRKKLRAIGNVTIEHSSFQKFLER.

The transit peptide at 1-29 (MSCCKGLTPQCVRVRLPRRPALSHPARLY) directs the protein to the mitochondrion. Positions 23–50 (SHPARLYSSSSSSNSHSSPSRPRLLSRP) are enriched in low complexity. The disordered stretch occupies residues 23–85 (SHPARLYSSS…RSSHHSSAPM (63 aa)). Positions 98–283 (ERYRNFCVIA…AVIEQIPHPT (186 aa)) constitute a tr-type G domain. GTP is bound by residues 107–114 (AHVDHGKS), 172–176 (DTPGH), and 226–229 (NKID).

It belongs to the TRAFAC class translation factor GTPase superfamily. Classic translation factor GTPase family. LepA subfamily.

The protein resides in the mitochondrion inner membrane. The catalysed reaction is GTP + H2O = GDP + phosphate + H(+). Functionally, promotes mitochondrial protein synthesis. May act as a fidelity factor of the translation reaction, by catalyzing a one-codon backward translocation of tRNAs on improperly translocated ribosomes. Binds to mitochondrial ribosomes in a GTP-dependent manner. This is Translation factor GUF1, mitochondrial from Pyricularia oryzae (strain 70-15 / ATCC MYA-4617 / FGSC 8958) (Rice blast fungus).